The sequence spans 277 residues: MDAQYNPRTVEEVFRDFKGRRAGLVRALTADVEDFFRQCDPEKENLCLYGFPNEHWEVNLPAEEVPPELPEPALGINFARDGMQEKDWLSMVAVHSDAWLLSVAFYFGARFGFDKNDRKRLFGMINDLPTIFEVVSGKSKAKPPSANNHSNSKSKSSNKTKSSEPRAKQPKPQPQPPVKNEGREEEGGPDDEEGGGGGGGGREEEHGETLCGACGESYGADEFWICCDICEKWFHGKCVKITPAKAEHIKQYKCPSCSGGNGGGGGGSGNGKRARPS.

Disordered stretches follow at residues 138-206 (KSKA…EEEH) and 255-277 (PSCS…ARPS). A compositionally biased stretch (low complexity) spans 145–160 (SANNHSNSKSKSSNKT). The segment at 208–260 (ETLCGACGESYGADEFWICCDICEKWFHGKCVKITPAKAEHIKQYKCPSCSGG) adopts a PHD-type zinc-finger fold. Over residues 259-270 (GGNGGGGGGSGN) the composition is skewed to gly residues.

It belongs to the Alfin family. In terms of assembly, interacts with H3K4me3 and to a lesser extent with H3K4me2.

It localises to the nucleus. Its function is as follows. Histone-binding component that specifically recognizes H3 tails trimethylated on 'Lys-4' (H3K4me3), which mark transcription start sites of virtually all active genes. The sequence is that of PHD finger protein ALFIN-LIKE 9 from Oryza sativa subsp. indica (Rice).